The following is a 168-amino-acid chain: Pathogenesis-related protein 1A (168 aa).

Residues 1–30 form the signal peptide; sequence MGFVLFSQLPSFLLVSTLLLFLVISHSCRA. Residues 38–156 form the SCP domain; sequence LDAHNTARAD…NGGYVVSCNY (119 aa).

This sequence belongs to the CRISP family. Post-translationally, three disulfide bonds are present.

The protein resides in the vacuole. Functionally, probably involved in the defense reaction of plants against pathogens. The polypeptide is Pathogenesis-related protein 1A (Nicotiana tabacum (Common tobacco)).